Consider the following 80-residue polypeptide: Acyl carrier protein (80 aa).

A Carrier domain is found at 4–79; it reads QEIFEKVKAV…DAVEYIKAKL (76 aa). Ser39 is modified (O-(pantetheine 4'-phosphoryl)serine).

Belongs to the acyl carrier protein (ACP) family. Post-translationally, 4'-phosphopantetheine is transferred from CoA to a specific serine of apo-ACP by AcpS. This modification is essential for activity because fatty acids are bound in thioester linkage to the sulfhydryl of the prosthetic group.

It is found in the cytoplasm. Its pathway is lipid metabolism; fatty acid biosynthesis. In terms of biological role, carrier of the growing fatty acid chain in fatty acid biosynthesis. This chain is Acyl carrier protein, found in Thermus thermophilus (strain ATCC BAA-163 / DSM 7039 / HB27).